The primary structure comprises 394 residues: Cytochrome b (394 aa).

Transmembrane regions (helical) follow at residues 39-59 (FGSL…FLAM), 83-105 (WLLR…LHTF), 120-140 (VWCL…IGYV), and 186-206 (FFSL…LHLA). Heme b is bound by residues His89 and His103. Heme b contacts are provided by His191 and His204. Residue His209 coordinates a ubiquinone. Helical transmembrane passes span 232 to 252 (FYVK…IWIF), 296 to 316 (AGGV…PFFK), 328 to 348 (IYQG…WIGC), and 355 to 374 (FVTI…AITP).

This sequence belongs to the cytochrome b family. As to quaternary structure, the main subunits of complex b-c1 are: cytochrome b, cytochrome c1 and the Rieske protein. Requires heme b as cofactor.

It is found in the mitochondrion inner membrane. Functionally, component of the ubiquinol-cytochrome c reductase complex (complex III or cytochrome b-c1 complex) that is part of the mitochondrial respiratory chain. The b-c1 complex mediates electron transfer from ubiquinol to cytochrome c. Contributes to the generation of a proton gradient across the mitochondrial membrane that is then used for ATP synthesis. The chain is Cytochrome b (MT-CYB) from Oenothera berteroana (Bertero's evening primrose).